The primary structure comprises 317 residues: Protein IRX15-LIKE (317 aa).

Residues L27 to T47 form a helical membrane-spanning segment.

Expressed in roots, rosette leaves, stems and siliques. Expressed in the xylem.

It is found in the golgi apparatus membrane. In terms of biological role, required for xylan biosynthesis, but not directly involved in catalyzing the addition of sugars to the growing polymer. This is Protein IRX15-LIKE (IRX15-L) from Arabidopsis thaliana (Mouse-ear cress).